The following is a 273-amino-acid chain: Large ribosomal subunit protein uL2 (273 aa).

Disordered stretches follow at residues lysine 28–isoleucine 54 and arginine 221–lysine 273. Over residues lysine 39–arginine 48 the composition is skewed to low complexity.

Belongs to the universal ribosomal protein uL2 family. In terms of assembly, part of the 50S ribosomal subunit. Forms a bridge to the 30S subunit in the 70S ribosome.

Its function is as follows. One of the primary rRNA binding proteins. Required for association of the 30S and 50S subunits to form the 70S ribosome, for tRNA binding and peptide bond formation. It has been suggested to have peptidyltransferase activity; this is somewhat controversial. Makes several contacts with the 16S rRNA in the 70S ribosome. The protein is Large ribosomal subunit protein uL2 of Pectobacterium carotovorum subsp. carotovorum (strain PC1).